The chain runs to 562 residues: Glutamine--tRNA ligase (562 aa).

The 'HIGH' region motif lies at 35 to 45 (PEPNGYLHIGH). ATP contacts are provided by residues 36–38 (EPN) and 42–48 (HIGHAKS). Residues aspartate 68 and tyrosine 213 each coordinate L-glutamine. ATP contacts are provided by residues threonine 232, 262–263 (RL), and 270–272 (LSK). The 'KMSKS' region signature appears at 269-273 (ILSKR).

Belongs to the class-I aminoacyl-tRNA synthetase family. As to quaternary structure, monomer.

It is found in the cytoplasm. It carries out the reaction tRNA(Gln) + L-glutamine + ATP = L-glutaminyl-tRNA(Gln) + AMP + diphosphate. The protein is Glutamine--tRNA ligase of Buchnera aphidicola subsp. Schizaphis graminum (strain Sg).